We begin with the raw amino-acid sequence, 457 residues long: Cyclic dof factor 2 (457 aa).

The disordered stretch occupies residues M1 to K130. A compositionally biased stretch (polar residues) spans D22–Q35. Acidic residues-rich tracts occupy residues T45–G54 and E62–S73. 2 stretches are compositionally biased toward basic and acidic residues: residues E74 to S94 and E106 to E118. A Dof-type zinc finger spans residues L138–S192. Zn(2+) contacts are provided by C140, C143, C165, and C168. 2 disordered regions span residues Q334–P377 and A417–S457. Low complexity predominate over residues S337–P346.

Interacts with ADO2 (via kelch repeats) and ADO3 (via kelch repeats). As to expression, expressed in the vasculature of cotyledons and hypocotyls, leaves and roots.

Its subcellular location is the nucleus. Functionally, transcription factor that binds specifically to a 5'-AA[AG]G-3' consensus core sequence. Regulates a photoperiodic flowering response. Transcriptional repressor of 'CONSTANS' expression. The stability of CDF2 is controlled by 'GIGANTEA' and redundantly by ADO3, ADO2 and/or ADO1. The chain is Cyclic dof factor 2 (CDF2) from Arabidopsis thaliana (Mouse-ear cress).